Consider the following 351-residue polypeptide: Xaa-Pro dipeptidase (351 aa).

Co(2+) is bound by residues aspartate 212, aspartate 223, histidine 287, glutamate 316, and glutamate 330.

The protein belongs to the peptidase M24B family. Archaeal-type prolidase subfamily. Homodimer. It depends on Co(2+) as a cofactor.

The protein localises to the cytoplasm. The catalysed reaction is Xaa-L-Pro dipeptide + H2O = an L-alpha-amino acid + L-proline. In terms of biological role, splits dipeptides with a prolyl in the C-terminal position and a nonpolar amino acid at the N-terminal position. The protein is Xaa-Pro dipeptidase (pepQ) of Pyrococcus horikoshii (strain ATCC 700860 / DSM 12428 / JCM 9974 / NBRC 100139 / OT-3).